The sequence spans 2166 residues: Protein TIC236, chloroplastic (2166 aa).

The transit peptide at 1–37 (MSLRLQNPFLSTPLLHGSFNRREKRINVARRAFRSKR) directs the protein to the chloroplast. At 38 to 101 (IYSEKKQNDW…RSLAPVWEEG (64 aa)) the chain is on the stromal side. A helical membrane pass occupies residues 102–122 (LFFLRCSVFFAVISGVCLLVW). Residues 123-2166 (YGQNKARVFV…LFEYSATSQD (2044 aa)) are Chloroplast intermembrane-facing. Positions 1611 to 1649 (MSEGEVSETDRGGAVKIPSWAKEKEDDEKRTSRDRSEER) are disordered. Residues 1631 to 1649 (AKEKEDDEKRTSRDRSEER) show a composition bias toward basic and acidic residues.

The protein belongs to the TamB family. As to quaternary structure, part of the TIC complex, which can interact with components of the TOC complex to form a larger import complex. Interacts with the TOC complex component TOC75-3.

It localises to the plastid. It is found in the chloroplast inner membrane. Its subcellular location is the chloroplast intermembrane space. Functionally, part of the inner chloroplast membrane translocon complex (TIC) which associates with the outer chloroplast membrane translocon complex (TOC) and forms a supercomplex involved in protein precursor import into the chloroplast stroma. Required for the import of HSP93, TIC40 and RBCS protein precursors in the chloroplast stroma. Links the outer and inner membrane translocons of the chloroplast envelope. The polypeptide is Protein TIC236, chloroplastic (Arabidopsis thaliana (Mouse-ear cress)).